We begin with the raw amino-acid sequence, 511 residues long: Glucose-1-phosphate adenylyltransferase large subunit 1, chloroplastic/amyloplastic (511 aa).

A chloroplast-targeting transit peptide spans 1–58; the sequence is MAAMDLRVAAPASVAAAARCGTSLARPWPARAVGGGGGGGGRGRRLSVRTSVATTEAA.

The protein belongs to the bacterial/plant glucose-1-phosphate adenylyltransferase family. Heterotetramer composed of two small and two large subunits. In terms of tissue distribution, expressed in leaves and stems.

The protein localises to the plastid. It localises to the chloroplast. It is found in the amyloplast. It catalyses the reaction alpha-D-glucose 1-phosphate + ATP + H(+) = ADP-alpha-D-glucose + diphosphate. The protein operates within glycan biosynthesis; starch biosynthesis. With respect to regulation, activated by 3'phosphoglycerate, inhibited by orthophosphate. Allosteric regulation. Its function is as follows. Involved in synthesis of starch. Catalyzes the synthesis of ADP-glucose, a molecule that serves as an activated glycosyl donor for alpha-1,4-glucan synthesis. Essential for starch synthesis in leaf chloroplasts and endosperm amyloplasts. This Oryza sativa subsp. japonica (Rice) protein is Glucose-1-phosphate adenylyltransferase large subunit 1, chloroplastic/amyloplastic.